Here is a 405-residue protein sequence, read N- to C-terminus: Acetate kinase (405 aa).

Residue Asn-7 coordinates Mg(2+). Residue Lys-14 coordinates ATP. Arg-99 contacts substrate. Asp-156 acts as the Proton donor/acceptor in catalysis. Residues 215–219 (HLGNG), 290–292 (DMR), and 338–342 (GVGEH) contribute to the ATP site. Glu-391 contacts Mg(2+).

It belongs to the acetokinase family. Homodimer. It depends on Mg(2+) as a cofactor. Mn(2+) serves as cofactor.

The protein localises to the cytoplasm. It catalyses the reaction acetate + ATP = acetyl phosphate + ADP. The protein operates within metabolic intermediate biosynthesis; acetyl-CoA biosynthesis; acetyl-CoA from acetate: step 1/2. In terms of biological role, catalyzes the formation of acetyl phosphate from acetate and ATP. Can also catalyze the reverse reaction. This Nostoc punctiforme (strain ATCC 29133 / PCC 73102) protein is Acetate kinase.